The sequence spans 602 residues: Isocyanide synthase A (602 aa).

Belongs to the isocyanide synthase family.

Its function is as follows. Isocyanide synthase involved in the biosynthesis of isocyanides (or isonitriles), a class of microbial secondary metabolites. The presence of an isonitrile moiety within a compound imparts unique biological (cytotoxic, antibacterial, and antiprotozoal) and chemical (transition metal coordination) properties and enables synthetic and biochemical applications. This Aspergillus fumigatus (strain ATCC MYA-4609 / CBS 101355 / FGSC A1100 / Af293) (Neosartorya fumigata) protein is Isocyanide synthase A.